We begin with the raw amino-acid sequence, 147 residues long: MMTQGPNLIGIHTNTKENEETQKFVNWFLNTSLTWDNNESKTPAQYFTESASYILPLKETFTGSNNKGQSGKNDGKNSNNTFKAKALELFKEQSENKIVGYSDPSDFRGGKFRESIGSAFNATVNSHVDFNTFVANFRANLGSGYDK.

The protein belongs to the MG185/MG260 family.

This is an uncharacterized protein from Mycoplasma pneumoniae (strain ATCC 29342 / M129 / Subtype 1) (Mycoplasmoides pneumoniae).